A 186-amino-acid polypeptide reads, in one-letter code: Sec-independent protein translocase protein TatB (186 aa).

The chain crosses the membrane as a helical span at residues 1–21; that stretch reads MFDIGFSELILLMVLGLVVLG. The disordered stretch occupies residues 120 to 186; sequence NAEKSQNAIS…SKSQSSKTKS (67 aa). Residues 177–186 are compositionally biased toward polar residues; it reads SKSQSSKTKS.

Belongs to the TatB family. In terms of assembly, the Tat system comprises two distinct complexes: a TatABC complex, containing multiple copies of TatA, TatB and TatC subunits, and a separate TatA complex, containing only TatA subunits. Substrates initially bind to the TatABC complex, which probably triggers association of the separate TatA complex to form the active translocon.

Its subcellular location is the cell inner membrane. Functionally, part of the twin-arginine translocation (Tat) system that transports large folded proteins containing a characteristic twin-arginine motif in their signal peptide across membranes. Together with TatC, TatB is part of a receptor directly interacting with Tat signal peptides. TatB may form an oligomeric binding site that transiently accommodates folded Tat precursor proteins before their translocation. The protein is Sec-independent protein translocase protein TatB of Haemophilus influenzae (strain ATCC 51907 / DSM 11121 / KW20 / Rd).